A 151-amino-acid chain; its full sequence is MDELPPEQIQLLKKAFDAFDREKKGCISTEMVGTILEMLGHRLDDDMLQEIIAEVDADGSGELEFEEFVSLASRFLVEEDAEAMQQELREAFRLYDKEGNGYITTNVLREILKELDDKITAEDLDMMIEEIDSDGSGTVDFDEFMEVMTGE.

EF-hand domains lie at 7-42, 43-78, 83-118, and 119-151; these read EQIQ…LGHR, LDDD…FLVE, AMQQ…LDDK, and ITAE…MTGE. Residues aspartate 56, aspartate 58, serine 60, glutamate 62, and glutamate 67 each coordinate Ca(2+). Residues aspartate 132, aspartate 134, serine 136, threonine 138, and glutamate 143 each contribute to the Ca(2+) site.

It belongs to the troponin C family.

Troponin is the central regulatory protein of striated muscle contraction. It consists of three components: Troponin-I (Tn-I) which is the inhibitor of actomyosin ATPase, Troponin-T (Tn-T) which contains the binding site for tropomyosin and Troponin-C (Tn-C). The binding of calcium to Tn-C abolishes the inhibitory action of Tn on actin filaments. This Blattella germanica (German cockroach) protein is Troponin C, isoallergen Bla g 6.0101.